Here is a 431-residue protein sequence, read N- to C-terminus: Citrate synthase 1 (431 aa).

Residues His-309 and Asp-366 contribute to the active site.

The protein belongs to the citrate synthase family. In terms of assembly, homohexamer.

It catalyses the reaction oxaloacetate + acetyl-CoA + H2O = citrate + CoA + H(+). The protein operates within carbohydrate metabolism; tricarboxylic acid cycle; isocitrate from oxaloacetate: step 1/2. This is Citrate synthase 1 (gltA2) from Mycobacterium tuberculosis (strain CDC 1551 / Oshkosh).